A 459-amino-acid chain; its full sequence is tRNA modification GTPase MnmE (459 aa).

(6S)-5-formyl-5,6,7,8-tetrahydrofolate contacts are provided by Arg30, Glu93, and Lys132. Residues 226–381 enclose the TrmE-type G domain; that stretch reads GVTMAIVGKP…LEEKILESVK (156 aa). Position 236 (Asn236) interacts with K(+). Residues 236 to 241, 255 to 261, and 280 to 283 contribute to the GTP site; these read NVGKST, TDIPGTT, and DTAG. Ser240 contributes to the Mg(2+) binding site. K(+)-binding residues include Thr255, Ile257, and Thr260. Position 261 (Thr261) interacts with Mg(2+). Lys459 serves as a coordination point for (6S)-5-formyl-5,6,7,8-tetrahydrofolate.

This sequence belongs to the TRAFAC class TrmE-Era-EngA-EngB-Septin-like GTPase superfamily. TrmE GTPase family. As to quaternary structure, homodimer. Heterotetramer of two MnmE and two MnmG subunits. It depends on K(+) as a cofactor.

The protein resides in the cytoplasm. Its function is as follows. Exhibits a very high intrinsic GTPase hydrolysis rate. Involved in the addition of a carboxymethylaminomethyl (cmnm) group at the wobble position (U34) of certain tRNAs, forming tRNA-cmnm(5)s(2)U34. This Fervidobacterium nodosum (strain ATCC 35602 / DSM 5306 / Rt17-B1) protein is tRNA modification GTPase MnmE.